Here is a 202-residue protein sequence, read N- to C-terminus: Odorant-binding protein 59a (202 aa).

The signal sequence occupies residues 1–20; that stretch reads MKQLIFLLICLSCGTCSIYA. The span at 43–53 shows a compositional bias: basic and acidic residues; sequence HRQDEDEDRGR. The tract at residues 43–105 is disordered; it reads HRQDEDEDRG…QSDGRNHTSN (63 aa). The segment covering 54–65 has biased composition (gly residues); it reads GGQGRQGNGYEY.

This sequence belongs to the PBP/GOBP family. In terms of tissue distribution, expressed in non-neuronal cells in hygrosensitive sensilla in the second chamber of the sacculus of the antenna third segment (at protein level).

It localises to the secreted. Odorant-binding protein required for hygrotaxis behavior in humidity-detecting sensilla. The protein is Odorant-binding protein 59a of Drosophila melanogaster (Fruit fly).